The primary structure comprises 2060 residues: Fatty acid synthase subunit beta (2060 aa).

The disordered stretch occupies residues 1-32 (MFPGDMESKASSMNGDQPSSPTPSSSTSVTIP). A compositionally biased stretch (low complexity) spans 18 to 32 (PSSPTPSSSTSVTIP). Positions 182–543 (VYVIFGGQGN…KAGQGVRVIH (362 aa)) are acetyltransferase (AT) domain. The active-site For acetyltransferase activity is the S301. An enoyl reductase (ER) domain region spans residues 600-845 (TRLFLQPPIM…LIVATEGAPD (246 aa)). Residues 1157–1640 (DKNLNWAKAL…CTGDRLAVSM (484 aa)) are dehydratase (DH) domain. One can recognise a MaoC-like domain in the interval 1549 to 1661 (FEEQEISFTA…VEVQIHKNMA (113 aa)). The tract at residues 1679 to 2043 (LVFTGQGSQK…FNEVLRLTGS (365 aa)) is malonyl/palmitoyl transferase (MT/PT) domain. S1824 serves as the catalytic For malonyltransferase activity.

This sequence belongs to the fungal fatty acid synthetase subunit beta family. [Alpha(6)beta(6)] hexamers of two multifunctional subunits (alpha and beta).

The catalysed reaction is acetyl-CoA + n malonyl-CoA + 2n NADPH + 4n H(+) = a long-chain-acyl-CoA + n CoA + n CO2 + 2n NADP(+).. It carries out the reaction holo-[ACP] + acetyl-CoA = acetyl-[ACP] + CoA. It catalyses the reaction holo-[ACP] + malonyl-CoA = malonyl-[ACP] + CoA. The enzyme catalyses a (3R)-hydroxyacyl-[ACP] = a (2E)-enoyl-[ACP] + H2O. The catalysed reaction is a 2,3-saturated acyl-[ACP] + NAD(+) = a (2E)-enoyl-[ACP] + NADH + H(+). It carries out the reaction (9Z)-octadecenoyl-[ACP] + H2O = (9Z)-octadecenoate + holo-[ACP] + H(+). It functions in the pathway mycotoxin biosynthesis. Its function is as follows. Fatty acid synthase subunit beta; part of the gene cluster that mediates the biosynthesis of gramillins A and B, bicyclic lipopeptides that induce cell death in maize leaves but not in wheat leaves. The nonribosomal peptide synthetase GRA1 incorporates respectively a glutamic adic (Glu), a leucine (Leu), a serine (Ser), a hydroxyglutamine (HOGln), a 2-amino decanoic acid, and 2 cysteins (CysB and CysA). The biosynthesis of 2-amino decanoic acid incorporated in gramillins could be initiated by a fatty acid synthase composed of the alpha and beta subunits FGSG_00036 and FGSG_11656. The cytochrome P450 monooxygenase FGSG_15680 could hydroxylate the fatty acid chain. Subsequent oxidation to the ketone by the oxidoreductase FGSG_00048 and transamination by aminotransferase FGSG_00049 could form 2-amino-decanoic acid. On the other hand, FGSG_15680 could also be responsible for the HO-modified glutamine at the gamma-position. Whether hydroxylation occurs on the fully assembled product or on the Gln residue prior to assembly into the gramillins requires further proof. The thioredoxin FGSG_00043 could also be required for the disulfide-bond formation between CysA and CysB. The specific involvement of the remaining proteins from the cluster is more difficult to discern, but could have broader regulatory (FGSG_00040 and FGSG_11657) or enzymatic functions (FGSG_00044 and FGSG_00045). The final C-domain of GRA1 does not possess the expected sequence of a termination CT domain, often implicated in macrocyclization and release of a cyclopeptidein fungal NRPs; and the thioesterase FGSG_00047 may act in concert with the terminal C-domain of GRA1 to catalyze the formation of the macrocyclic anhydride and release of the products. The polypeptide is Fatty acid synthase subunit beta (Gibberella zeae (strain ATCC MYA-4620 / CBS 123657 / FGSC 9075 / NRRL 31084 / PH-1) (Wheat head blight fungus)).